Here is a 689-residue protein sequence, read N- to C-terminus: Glycine--tRNA ligase beta subunit (689 aa).

This sequence belongs to the class-II aminoacyl-tRNA synthetase family. Tetramer of two alpha and two beta subunits.

Its subcellular location is the cytoplasm. It carries out the reaction tRNA(Gly) + glycine + ATP = glycyl-tRNA(Gly) + AMP + diphosphate. The protein is Glycine--tRNA ligase beta subunit of Yersinia enterocolitica serotype O:8 / biotype 1B (strain NCTC 13174 / 8081).